A 197-amino-acid polypeptide reads, in one-letter code: dTTP/UTP pyrophosphatase (197 aa).

The active-site Proton acceptor is Asp70.

The protein belongs to the Maf family. YhdE subfamily. It depends on a divalent metal cation as a cofactor.

The protein resides in the cytoplasm. It carries out the reaction dTTP + H2O = dTMP + diphosphate + H(+). It catalyses the reaction UTP + H2O = UMP + diphosphate + H(+). Functionally, nucleoside triphosphate pyrophosphatase that hydrolyzes dTTP and UTP. May have a dual role in cell division arrest and in preventing the incorporation of modified nucleotides into cellular nucleic acids. This is dTTP/UTP pyrophosphatase (yceF2) from Salmonella choleraesuis (strain SC-B67).